The chain runs to 221 residues: Thymidylate kinase (221 aa).

12–19 (GIDGAGKS) is a binding site for ATP.

Belongs to the thymidylate kinase family.

The catalysed reaction is dTMP + ATP = dTDP + ADP. Phosphorylation of dTMP to form dTDP in both de novo and salvage pathways of dTTP synthesis. The sequence is that of Thymidylate kinase from Paracidovorax citrulli (strain AAC00-1) (Acidovorax citrulli).